The following is a 398-amino-acid chain: Dihydrolipoyllysine-residue acetyltransferase component of acetoin cleaving system (398 aa).

One can recognise a Lipoyl-binding domain in the interval 2-77 (AVKVVMPKLG…PPGTAICYIG (76 aa)). An N6-lipoyllysine modification is found at Lys43. In terms of domain architecture, Peripheral subunit-binding (PSBD) spans 118–155 (KISPVARKIAEKAGLDLKQLKGTGPGGRIVKDDVTKAL). Residues His371 and Asp375 contribute to the active site.

It belongs to the 2-oxoacid dehydrogenase family. Requires (R)-lipoate as cofactor.

The enzyme catalyses N(6)-[(R)-dihydrolipoyl]-L-lysyl-[protein] + acetyl-CoA = N(6)-[(R)-S(8)-acetyldihydrolipoyl]-L-lysyl-[protein] + CoA. Its pathway is ketone degradation; acetoin degradation. This chain is Dihydrolipoyllysine-residue acetyltransferase component of acetoin cleaving system (acoC), found in Bacillus subtilis (strain 168).